The following is a 502-amino-acid chain: Bone morphogenetic protein receptor type-1B (502 aa).

The first 13 residues, 1 to 13 (MLLRSSGKLNVGT), serve as a signal peptide directing secretion. The segment at 1-24 (MLLRSSGKLNVGTKKEDGESTAPT) is disordered. Residues 14 to 126 (KKEDGESTAP…DFVDGPIHHK (113 aa)) lie on the Extracellular side of the membrane. Intrachain disulfides connect C32–C53, C34–C38, C47–C71, C81–C95, and C96–C102. A helical transmembrane segment spans residues 127-148 (ALLISVTVCSLLLVLIILFCYF). The Cytoplasmic portion of the chain corresponds to 149–502 (RYKRQEARPR…KMSESQDIKL (354 aa)). The GS domain maps to 174 to 203 (ESLRDLIEQSQSSGSGSGLPLLVQRTIAKQ). Positions 204–494 (IQMVKQIGKG…LRVKKTLAKM (291 aa)) constitute a Protein kinase domain. ATP contacts are provided by residues 210–218 (IGKGRYGEV) and K231. The active-site Proton acceptor is D332.

This sequence belongs to the protein kinase superfamily. TKL Ser/Thr protein kinase family. TGFB receptor subfamily. Interacts with high affinity with GDF5; positively regulates chondrocyte differentiation. Interacts with SCUBE3. Interacts with TSC22D1/TSC-22. Interacts with TGFBR3. Requires Mg(2+) as cofactor. Mn(2+) serves as cofactor. Post-translationally, autophosphorylated.

The protein localises to the cell membrane. It carries out the reaction L-threonyl-[receptor-protein] + ATP = O-phospho-L-threonyl-[receptor-protein] + ADP + H(+). The enzyme catalyses L-seryl-[receptor-protein] + ATP = O-phospho-L-seryl-[receptor-protein] + ADP + H(+). On ligand binding, forms a receptor complex consisting of two type II and two type I transmembrane serine/threonine kinases. Type II receptors phosphorylate and activate type I receptors which autophosphorylate, then bind and activate SMAD transcriptional regulators. Receptor for BMP7/OP-1. Receptor for GDF5. Positively regulates chondrocyte differentiation through GDF5 interaction. The sequence is that of Bone morphogenetic protein receptor type-1B (Bmpr1b) from Mus musculus (Mouse).